The chain runs to 1113 residues: Protein KIBRA (1113 aa).

WW domains follow at residues 6 to 39 and 53 to 86; these read LPLPEGWEEARDFDGKVYYIDHTNRTTSWIDPRD and DELPLGWEEAYDPQVGDYFIDHNTKTTQIEDPRV. 2 coiled-coil regions span residues 107–193 and 293–431; these read LSAQ…RGFQ and NSNN…SSMQ. Phosphoserine is present on serine 141. Disordered stretches follow at residues 429–448 and 522–547; these read SMQSLSSGSSPGSLTSSRGS and RSLSGTPKSMTSLSPRSSLSSPSPPC. The span at 522–532 shows a compositional bias: polar residues; the sequence is RSLSGTPKSMT. Over residues 533-542 the composition is skewed to low complexity; that stretch reads SLSPRSSLSS. Position 535 is a phosphoserine (serine 535). Serine 542 carries the post-translational modification Phosphoserine; by CDK1. One can recognise a C2 domain in the interval 658–781; that stretch reads GATRIQIALK…RSGERSTRWY (124 aa). The tract at residues 825 to 975 is disordered; the sequence is LEKRQEGRSS…RSVRMKRPSS (151 aa). The tract at residues 839-1113 is interaction with histone H3; the sequence is EDSWRYEETS…NIPALSADDV (275 aa). Residues 847–870 show a composition bias toward acidic residues; that stretch reads TSENEAVAEEEEEEVEEEEGEEDV. Residue serine 899 is modified to Phosphoserine. Threonine 912 is modified (phosphothreonine). Residues 924–938 show a composition bias toward polar residues; it reads IIRSKTFSPGPQSQY. Residue serine 927 is modified to Phosphoserine. At threonine 929 the chain carries Phosphothreonine. Serine 931 bears the Phosphoserine; by CDK1 mark. At serine 947 the chain carries Phosphoserine. Interaction with PRKCZ stretches follow at residues 953–996 and 956–975; these read SKKP…LDLQ and PPFVRNSLERRSVRMKRPSS. Phosphoserine; by PKC/PRKCZ is present on residues serine 975 and serine 978. Residues 1001–1032 are a coiled coil; the sequence is WHSQLTQEISVLKELKEQLEQAKSHGEKELPQ. An ADDV motif motif is present at residues 1111–1113; it reads DDV.

Belongs to the WWC family. KIBRA subfamily. In terms of assembly, homodimer. Forms heterodimers with WWC2 and WWC3. Interacts with DDN. Interacts with DYNLL1 and histone H3. The interaction with DYNLL1 is mandatory for the recruitment and transactivation functions of ESR1 or DYNLL1 to the target chromatin and the interaction with histone H3 ensures proper regulatory interaction of WWC1-DYNLL1-ESR1 complexes with target chromatin. Interacts (via WW domains) with DDR1 (via PPxY motif) in a collagen-regulated manner. Interacts with PRKCZ (via the protein kinase domain). Forms a tripartite complex with DDR1 and PRKCZ, but predominantly in the absence of collagen. Interacts (via the ADDV motif) with PATJ (via PDZ domain 8). Interacts (via WW domains) with SYNPO (via PPxY motifs). Interacts with NF2 and SNX4. Interacts with DLC1 and PRKCZ. Interacts (via WW domains) with LATS1 and LATS2. Phosphorylation at Ser-542 and Ser-931 by CDK1 in response to spindle damage stress regulates mitotic exit, these two sites are dephosphorylated by CDC14B. As to expression, expressed in mammary epithelial cells and breast cancer cell lines. Found in the luminal epithelium surrounding the ducts in the normal breast. In the brain, expressed in somatodendritic compartment of neurons in the cortex and hippocampus and in the cerebellum it is found in the Purkinje cells and some granule cells (at protein level). Detected in brain, heart, colon and kidney. In the kidney, expressed in glomerular podocytes, in some tubules and in the collecting duct.

Its subcellular location is the cytoplasm. It is found in the perinuclear region. It localises to the nucleus. The protein localises to the cell projection. The protein resides in the ruffle membrane. Its subcellular location is the cytosol. Its function is as follows. Regulator of the Hippo signaling pathway, also known as the Salvador-Warts-Hippo (SWH) pathway. Enhances phosphorylation of LATS1 and YAP1 and negatively regulates cell proliferation and organ growth due to a suppression of the transcriptional activity of YAP1, the major effector of the Hippo pathway. Along with NF2 can synergistically induce the phosphorylation of LATS1 and LATS2 and function in the regulation of Hippo signaling pathway. Acts as a transcriptional coactivator of ESR1 which plays an essential role in DYNLL1-mediated ESR1 transactivation. Regulates collagen-stimulated activation of the ERK/MAPK cascade. Modulates directional migration of podocytes. Plays a role in cognition and memory performance. Plays an important role in regulating AMPA-selective glutamate receptors (AMPARs) trafficking underlying synaptic plasticity and learning. The sequence is that of Protein KIBRA from Homo sapiens (Human).